The sequence spans 296 residues: tRNA (guanine-N(7)-)-methyltransferase (296 aa).

A disordered region spans residues 1-26; the sequence is MSKRTREESEMEAGPSTASPGVSVSP. S-adenosyl-L-methionine is bound by residues glycine 101, 124–125, 168–169, and leucine 188; these read EI and NS. Residue aspartate 191 is part of the active site. 266–268 is an S-adenosyl-L-methionine binding site; that stretch reads TEE.

The protein belongs to the class I-like SAM-binding methyltransferase superfamily. TrmB family. As to quaternary structure, forms a complex with TRM82.

Its subcellular location is the nucleus. The enzyme catalyses guanosine(46) in tRNA + S-adenosyl-L-methionine = N(7)-methylguanosine(46) in tRNA + S-adenosyl-L-homocysteine. It participates in tRNA modification; N(7)-methylguanine-tRNA biosynthesis. Catalyzes the formation of N(7)-methylguanine at position 46 (m7G46) in tRNA. The protein is tRNA (guanine-N(7)-)-methyltransferase of Cryptococcus neoformans var. neoformans serotype D (strain JEC21 / ATCC MYA-565) (Filobasidiella neoformans).